We begin with the raw amino-acid sequence, 129 residues long: Thioredoxin-like 3-3 (129 aa).

Basic and acidic residues predominate over residues M1–G10. Positions M1–G30 are disordered. The 123-residue stretch at K7–S129 folds into the Thioredoxin domain. A compositionally biased stretch (polar residues) spans P19–G30. Active-site nucleophile residues include C58 and C61. C58 and C61 form a disulfide bridge.

This sequence belongs to the thioredoxin family.

In terms of biological role, probable thiol-disulfide oxidoreductase that may participate in various redox reactions. The polypeptide is Thioredoxin-like 3-3 (Oryza sativa subsp. japonica (Rice)).